The chain runs to 211 residues: Thiamine-phosphate synthase (211 aa).

4-amino-2-methyl-5-(diphosphooxymethyl)pyrimidine is bound by residues Q37–K41 and N69. Mg(2+)-binding residues include D70 and D89. Position 108 (S108) interacts with 4-amino-2-methyl-5-(diphosphooxymethyl)pyrimidine. Residue T134–T136 coordinates 2-[(2R,5Z)-2-carboxy-4-methylthiazol-5(2H)-ylidene]ethyl phosphate. Position 137 (K137) interacts with 4-amino-2-methyl-5-(diphosphooxymethyl)pyrimidine. 2-[(2R,5Z)-2-carboxy-4-methylthiazol-5(2H)-ylidene]ethyl phosphate contacts are provided by residues G166 and V186–S187.

The protein belongs to the thiamine-phosphate synthase family. Mg(2+) serves as cofactor.

The enzyme catalyses 2-[(2R,5Z)-2-carboxy-4-methylthiazol-5(2H)-ylidene]ethyl phosphate + 4-amino-2-methyl-5-(diphosphooxymethyl)pyrimidine + 2 H(+) = thiamine phosphate + CO2 + diphosphate. It catalyses the reaction 2-(2-carboxy-4-methylthiazol-5-yl)ethyl phosphate + 4-amino-2-methyl-5-(diphosphooxymethyl)pyrimidine + 2 H(+) = thiamine phosphate + CO2 + diphosphate. The catalysed reaction is 4-methyl-5-(2-phosphooxyethyl)-thiazole + 4-amino-2-methyl-5-(diphosphooxymethyl)pyrimidine + H(+) = thiamine phosphate + diphosphate. The protein operates within cofactor biosynthesis; thiamine diphosphate biosynthesis; thiamine phosphate from 4-amino-2-methyl-5-diphosphomethylpyrimidine and 4-methyl-5-(2-phosphoethyl)-thiazole: step 1/1. Condenses 4-methyl-5-(beta-hydroxyethyl)thiazole monophosphate (THZ-P) and 2-methyl-4-amino-5-hydroxymethyl pyrimidine pyrophosphate (HMP-PP) to form thiamine monophosphate (TMP). The sequence is that of Thiamine-phosphate synthase from Salmonella dublin (strain CT_02021853).